Reading from the N-terminus, the 479-residue chain is Ribulose bisphosphate carboxylase large chain (479 aa).

A propeptide spanning residues 1–2 is cleaved from the precursor; the sequence is MS. Pro-3 is modified (N-acetylproline). Residues Thr-65, Asn-123, 173 to 177, and 201 to 204 each bind substrate; these read TIKPK and KDDE. Lys-175 serves as the catalytic Proton acceptor. Lys-201, Asp-203, and Glu-204 together coordinate Mg(2+). The residue at position 201 (Lys-201) is an N6-carboxylysine. Ser-208 is subject to Phosphoserine. His-294 serves as the catalytic Proton acceptor. Residues 294–295 and His-327 contribute to the substrate site; that span reads HR. Thr-330 is modified (phosphothreonine). Substrate-binding positions include Lys-334 and 379-381; that span reads SGG.

The protein belongs to the RuBisCO large chain family. Type I subfamily. Heterohexadecamer of 8 large chains and 8 small chains; disulfide-linked. The disulfide link is formed within the large subunit homodimers. Interacts with RBCX1 and RBCX1. An intermediate complex made of eight RbcL subunits interacts with the chaperone BSD2. It depends on Mg(2+) as a cofactor. The disulfide bond which can form in the large chain dimeric partners within the hexadecamer appears to be associated with oxidative stress and protein turnover.

The protein resides in the plastid. The protein localises to the chloroplast. The enzyme catalyses 2 (2R)-3-phosphoglycerate + 2 H(+) = D-ribulose 1,5-bisphosphate + CO2 + H2O. The catalysed reaction is D-ribulose 1,5-bisphosphate + O2 = 2-phosphoglycolate + (2R)-3-phosphoglycerate + 2 H(+). Its function is as follows. RuBisCO catalyzes two reactions: the carboxylation of D-ribulose 1,5-bisphosphate, the primary event in carbon dioxide fixation, as well as the oxidative fragmentation of the pentose substrate in the photorespiration process. Both reactions occur simultaneously and in competition at the same active site. Binds to abscisic acid (ABA). The sequence is that of Ribulose bisphosphate carboxylase large chain from Arabidopsis thaliana (Mouse-ear cress).